The primary structure comprises 182 residues: Large ribosomal subunit protein uL5 (182 aa).

The protein belongs to the universal ribosomal protein uL5 family. In terms of assembly, part of the 50S ribosomal subunit; part of the 5S rRNA/L5/L18/L25 subcomplex. Contacts the 5S rRNA and the P site tRNA. Forms a bridge to the 30S subunit in the 70S ribosome.

This is one of the proteins that bind and probably mediate the attachment of the 5S RNA into the large ribosomal subunit, where it forms part of the central protuberance. In the 70S ribosome it contacts protein S13 of the 30S subunit (bridge B1b), connecting the 2 subunits; this bridge is implicated in subunit movement. Contacts the P site tRNA; the 5S rRNA and some of its associated proteins might help stabilize positioning of ribosome-bound tRNAs. The chain is Large ribosomal subunit protein uL5 from Borrelia garinii subsp. bavariensis (strain ATCC BAA-2496 / DSM 23469 / PBi) (Borreliella bavariensis).